The following is a 136-amino-acid chain: Mini-ribonuclease 3 (136 aa).

D20 is a catalytic residue.

Belongs to the MrnC RNase family. In terms of assembly, homodimer. The cofactor is Mg(2+).

The protein resides in the cytoplasm. Involved in correct processing of both the 5' and 3' ends of 23S rRNA precursor. Processes 30S rRNA precursor transcript even in absence of ribonuclease 3 (Rnc); Rnc processes 30S rRNA into smaller rRNA precursors. This chain is Mini-ribonuclease 3, found in Listeria monocytogenes serovar 1/2a (strain ATCC BAA-679 / EGD-e).